We begin with the raw amino-acid sequence, 574 residues long: NADH-ubiquinone oxidoreductase chain 5 (574 aa).

16 helical membrane passes run 10–30, 50–70, 87–107, 111–131, 141–161, 181–203, 211–231, 240–260, 280–300, 301–321, 340–360, 381–401, 423–443, 458–478, 489–509, and 554–574; these read VASK…LYMV, MMMT…VVMI, FINR…MLIF, LIIL…LVIY, GMIT…AIAW, YQAL…SSWL, TPVS…FLLI, VWWF…MAGL, LGMM…FHMV, THAM…HSHM, TSCL…SGFY, LILF…MCVV, MLLL…ILPL, TLML…TTNM, IINY…QFMM, and TPMN…LVAI.

The protein belongs to the complex I subunit 5 family.

Its subcellular location is the mitochondrion inner membrane. The catalysed reaction is a ubiquinone + NADH + 5 H(+)(in) = a ubiquinol + NAD(+) + 4 H(+)(out). Core subunit of the mitochondrial membrane respiratory chain NADH dehydrogenase (Complex I) that is believed to belong to the minimal assembly required for catalysis. Complex I functions in the transfer of electrons from NADH to the respiratory chain. The immediate electron acceptor for the enzyme is believed to be ubiquinone. This Lumbricus terrestris (Common earthworm) protein is NADH-ubiquinone oxidoreductase chain 5 (ND5).